Consider the following 460-residue polypeptide: Tubby-related protein 3 (460 aa).

2 disordered regions span residues 37-132 (KKQR…ETAP) and 151-193 (YDEE…GVTA). Residues 151-162 (YDEEPDKEEDEG) are compositionally biased toward acidic residues. Residues 166-188 (SSPSARSEESAAASQKAASETGA) show a composition bias toward low complexity.

It belongs to the TUB family. Associates with the IFT complex A (IFT-A). Interacts with SIRT1. As to expression, widely expressed including eyes and adipose depots.

It localises to the nucleus. Its subcellular location is the cell membrane. The protein localises to the cell projection. It is found in the cilium. The protein resides in the cytoplasm. It localises to the secreted. Its function is as follows. Negative regulator of the Shh signaling transduction pathway: recruited to primary cilia via association with the IFT complex A (IFT-A) and is required for recruitment of G protein-coupled receptor GPR161 to cilia, a promoter of PKA-dependent basal repression machinery in Shh signaling. Binds to phosphorylated inositide (phosphoinositide) lipids. Both IFT-A- and phosphoinositide-binding properties are required to regulate ciliary G protein-coupled receptor trafficking. During adipogenesis, regulates ciliary trafficking of FFAR4 in preadipocytes. This Mus musculus (Mouse) protein is Tubby-related protein 3.